The chain runs to 24 residues: SPCTCSTCNCAGACNSCSCTSCSH.

Cysteine 3, cysteine 5, cysteine 8, cysteine 10, cysteine 17, cysteine 19, and cysteine 22 together coordinate Cd(2+).

Belongs to the metallothionein superfamily. Type 8 family. In terms of processing, contains 4 disulfide bonds.

Metallothioneins have a high content of cysteine residues that bind various heavy metals. The polypeptide is Metallothionein (Neonectria lugdunensis (Aquatic fungus)).